Reading from the N-terminus, the 426-residue chain is Dihydroorotase (426 aa).

Zn(2+) is bound by residues histidine 58 and histidine 60. Residues 60–62 and asparagine 92 each bind substrate; that span reads HLR. Zn(2+) is bound by residues aspartate 150, histidine 177, and histidine 230. Substrate is bound at residue asparagine 276. Residue aspartate 303 coordinates Zn(2+). Residue aspartate 303 is part of the active site. Residues histidine 307 and 321–322 contribute to the substrate site; that span reads FG.

It belongs to the metallo-dependent hydrolases superfamily. DHOase family. Class I DHOase subfamily. It depends on Zn(2+) as a cofactor.

It carries out the reaction (S)-dihydroorotate + H2O = N-carbamoyl-L-aspartate + H(+). It functions in the pathway pyrimidine metabolism; UMP biosynthesis via de novo pathway; (S)-dihydroorotate from bicarbonate: step 3/3. In terms of biological role, catalyzes the reversible cyclization of carbamoyl aspartate to dihydroorotate. The protein is Dihydroorotase of Listeria innocua serovar 6a (strain ATCC BAA-680 / CLIP 11262).